The chain runs to 500 residues: NAD(P)H-quinone oxidoreductase chain 4, chloroplastic (500 aa).

Transmembrane regions (helical) follow at residues 4-24, 31-51, 84-104, 111-129, 134-154, 167-187, 208-228, 242-262, 272-292, 305-325, 330-350, 386-406, 416-436, and 463-483; these read FPWL…IFLF, VIKW…TYAF, GFSL…TLAA, SRLF…IGLF, LLLF…LLSM, FILY…GIAL, ALEI…SPII, HYST…YGLV, AHSI…IYAA, IAYS…SISD, GAIL…FLAG, LALP…GIIT, ILIT…LLSM, and FVSI…DFVF.

The protein belongs to the complex I subunit 4 family.

The protein localises to the plastid. The protein resides in the chloroplast thylakoid membrane. It carries out the reaction a plastoquinone + NADH + (n+1) H(+)(in) = a plastoquinol + NAD(+) + n H(+)(out). The catalysed reaction is a plastoquinone + NADPH + (n+1) H(+)(in) = a plastoquinol + NADP(+) + n H(+)(out). The protein is NAD(P)H-quinone oxidoreductase chain 4, chloroplastic of Manihot esculenta (Cassava).